A 239-amino-acid polypeptide reads, in one-letter code: Ribonuclease 3 (239 aa).

Residues 11 to 133 (HTAIQKKLGY…MFAAVSFDAD (123 aa)) enclose the RNase III domain. Residue E46 participates in Mg(2+) binding. Residue D50 is part of the active site. D119 and E122 together coordinate Mg(2+). The active site involves E122. The 71-residue stretch at 160-230 (DGKTALQEAL…AKEALKWLEE (71 aa)) folds into the DRBM domain.

The protein belongs to the ribonuclease III family. Homodimer. Requires Mg(2+) as cofactor.

The protein resides in the cytoplasm. The enzyme catalyses Endonucleolytic cleavage to 5'-phosphomonoester.. Digests double-stranded RNA. Involved in the processing of primary rRNA transcript to yield the immediate precursors to the large and small rRNAs (23S and 16S). Processes some mRNAs, and tRNAs when they are encoded in the rRNA operon. Processes pre-crRNA and tracrRNA of type II CRISPR loci if present in the organism. This is Ribonuclease 3 from Neisseria gonorrhoeae (strain ATCC 700825 / FA 1090).